A 477-amino-acid polypeptide reads, in one-letter code: Glycogen synthase (477 aa).

Position 15 (lysine 15) interacts with ADP-alpha-D-glucose.

The protein belongs to the glycosyltransferase 1 family. Bacterial/plant glycogen synthase subfamily.

It carries out the reaction [(1-&gt;4)-alpha-D-glucosyl](n) + ADP-alpha-D-glucose = [(1-&gt;4)-alpha-D-glucosyl](n+1) + ADP + H(+). Its pathway is glycan biosynthesis; glycogen biosynthesis. In terms of biological role, synthesizes alpha-1,4-glucan chains using ADP-glucose. The protein is Glycogen synthase of Streptococcus pneumoniae (strain ATCC 700669 / Spain 23F-1).